A 62-amino-acid polypeptide reads, in one-letter code: MPNILSLTCICFNSVLYPTTSFFFAKLPEAYAIFNPIVDVMPVIPLFFFLLAFVWQAAVSFR.

Residues 1 to 25 constitute a propeptide that is removed on maturation; the sequence is MPNILSLTCICFNSVLYPTTSFFFA. The chain crosses the membrane as a helical span at residues 33-53; that stretch reads IFNPIVDVMPVIPLFFFLLAF.

This sequence belongs to the PsbK family. As to quaternary structure, PSII is composed of 1 copy each of membrane proteins PsbA, PsbB, PsbC, PsbD, PsbE, PsbF, PsbH, PsbI, PsbJ, PsbK, PsbL, PsbM, PsbT, PsbX, PsbY, PsbZ, Psb30/Ycf12, at least 3 peripheral proteins of the oxygen-evolving complex and a large number of cofactors. It forms dimeric complexes.

The protein resides in the plastid. It localises to the chloroplast thylakoid membrane. In terms of biological role, one of the components of the core complex of photosystem II (PSII). PSII is a light-driven water:plastoquinone oxidoreductase that uses light energy to abstract electrons from H(2)O, generating O(2) and a proton gradient subsequently used for ATP formation. It consists of a core antenna complex that captures photons, and an electron transfer chain that converts photonic excitation into a charge separation. This chain is Photosystem II reaction center protein K, found in Agrostis stolonifera (Creeping bentgrass).